The primary structure comprises 469 residues: Glutamate--tRNA ligase 1 (469 aa).

The 'HIGH' region motif lies at 10-20 (PSPTGYLHIGG). Zn(2+) is bound by residues C99, C101, C126, and D128. The 'KMSKS' region motif lies at 237-241 (RLSKR). K240 serves as a coordination point for ATP.

It belongs to the class-I aminoacyl-tRNA synthetase family. Glutamate--tRNA ligase type 1 subfamily. In terms of assembly, monomer. Zn(2+) serves as cofactor.

The protein localises to the cytoplasm. The enzyme catalyses tRNA(Glu) + L-glutamate + ATP = L-glutamyl-tRNA(Glu) + AMP + diphosphate. In terms of biological role, catalyzes the attachment of glutamate to tRNA(Glu) in a two-step reaction: glutamate is first activated by ATP to form Glu-AMP and then transferred to the acceptor end of tRNA(Glu). This Coxiella burnetii (strain RSA 331 / Henzerling II) protein is Glutamate--tRNA ligase 1.